The chain runs to 283 residues: MAEITASLVKELRERTGAGMMECKKALVEANGDIELAIDNMRKSGQAKAAKKAGRVAAEGVILARVASGFGVLVEMNCETDFVAKDAGFLDLANEVADFAVANKGTTIEALAAQFEEKRASLVAKIGENMNIRRIQYLEGEIIAQYLHGAKIGVLVAGQGSDEELKKVAMHVAASKPEFVNPEDVSAAVVEHERQIQIEIAMNSGKPKEIAEKMVEGRMKKFTGEVSLTGQPFVMDPSQSVGDYLKSVATSVTNFIRLEVGEGIEKVEEDFAAEVAKITAGNA.

Residues Thr-80–Val-83 are involved in Mg(2+) ion dislocation from EF-Tu.

This sequence belongs to the EF-Ts family.

The protein resides in the cytoplasm. Functionally, associates with the EF-Tu.GDP complex and induces the exchange of GDP to GTP. It remains bound to the aminoacyl-tRNA.EF-Tu.GTP complex up to the GTP hydrolysis stage on the ribosome. This chain is Elongation factor Ts, found in Haemophilus ducreyi (strain 35000HP / ATCC 700724).